The following is a 374-amino-acid chain: Proton-coupled zinc antiporter SLC30A8 (374 aa).

Residues 1-67 (MKGSEEAYLV…QREQTFAKKK (67 aa)) lie on the Cytoplasmic side of the membrane. The segment at 18–48 (YSLTKDSEKNHPSKPPLQDEENPQSKYHCHN) is disordered. Residues H45, C46, and H47 each contribute to the Zn(2+) site. Residues 45-47 (HCH) carry the HCH Motif; seals regulatory zinc-binding pocket motif. A helical transmembrane segment spans residues 68-88 (LCIASLICFVFISAEIVGGYI). Topologically, residues 89 to 91 (AGS) are lumenal, vesicle. Residues 92-112 (LAVVTDAAHLLVDLSSFFISL) form a helical membrane-spanning segment. Zn(2+) contacts are provided by H100, D104, and H131. The Cytoplasmic portion of the chain corresponds to 113–134 (CSLWLSSKSSTTRLTFGWHRAE). A helical membrane pass occupies residues 135 to 155 (ILGALMSVITIWLVTGVLVYL). At 156–169 (ACERLIRPDYTIDG) the chain is on the lumenal, vesicle side. Residues 170-190 (TVMLITSACALGANLVLALIL) traverse the membrane as a helical segment. Topologically, residues 191–222 (HQSGHGHSHAGGKHEHMASEYKPQTNASIRAA) are cytoplasmic. A helical transmembrane segment spans residues 223 to 243 (FIHVIGDLFQSISVLISALII). The Zn(2+) site is built by H225 and D229. Topologically, residues 244–251 (YFKPEYKM) are lumenal, vesicle. The chain crosses the membrane as a helical span at residues 252–272 (ADPICTFIFSIFVLITTVTVL). The Cytoplasmic segment spans residues 273-374 (RDLLTVLMEG…ECMFCYEPTQ (102 aa)). H306, H323, H350, E357, C366, and C369 together coordinate Zn(2+).

Belongs to the cation diffusion facilitator (CDF) transporter (TC 2.A.4) family. SLC30A subfamily. Homodimer.

It localises to the cytoplasmic vesicle. The protein resides in the secretory vesicle membrane. Its subcellular location is the cell membrane. It catalyses the reaction Zn(2+)(in) + 2 H(+)(out) = Zn(2+)(out) + 2 H(+)(in). Proton-coupled zinc ion antiporter mediating the entry of zinc into the lumen of pancreatic beta cell secretory granules, thereby regulating insulin secretion. The protein is Proton-coupled zinc antiporter SLC30A8 (slc30a8) of Xenopus tropicalis (Western clawed frog).